A 96-amino-acid chain; its full sequence is Co-chaperonin GroES (96 aa).

It belongs to the GroES chaperonin family. In terms of assembly, heptamer of 7 subunits arranged in a ring. Interacts with the chaperonin GroEL.

The protein resides in the cytoplasm. Functionally, together with the chaperonin GroEL, plays an essential role in assisting protein folding. The GroEL-GroES system forms a nano-cage that allows encapsulation of the non-native substrate proteins and provides a physical environment optimized to promote and accelerate protein folding. GroES binds to the apical surface of the GroEL ring, thereby capping the opening of the GroEL channel. This is Co-chaperonin GroES from Cupriavidus taiwanensis (strain DSM 17343 / BCRC 17206 / CCUG 44338 / CIP 107171 / LMG 19424 / R1) (Ralstonia taiwanensis (strain LMG 19424)).